A 342-amino-acid polypeptide reads, in one-letter code: tRNA N6-adenosine threonylcarbamoyltransferase (342 aa).

Fe cation contacts are provided by His-111 and His-115. Substrate contacts are provided by residues 134-138, Asp-167, Gly-180, and Asn-274; that span reads LVSGG. Position 302 (Asp-302) interacts with Fe cation.

The protein belongs to the KAE1 / TsaD family. Requires Fe(2+) as cofactor.

It localises to the cytoplasm. It carries out the reaction L-threonylcarbamoyladenylate + adenosine(37) in tRNA = N(6)-L-threonylcarbamoyladenosine(37) in tRNA + AMP + H(+). Required for the formation of a threonylcarbamoyl group on adenosine at position 37 (t(6)A37) in tRNAs that read codons beginning with adenine. Is involved in the transfer of the threonylcarbamoyl moiety of threonylcarbamoyl-AMP (TC-AMP) to the N6 group of A37, together with TsaE and TsaB. TsaD likely plays a direct catalytic role in this reaction. This Herminiimonas arsenicoxydans protein is tRNA N6-adenosine threonylcarbamoyltransferase.